A 636-amino-acid polypeptide reads, in one-letter code: Polyadenylate-binding protein 1 (636 aa).

Residue M1 is modified to N-acetylmethionine. RRM domains follow at residues 11 to 89 (ASLY…WSQR), 99 to 175 (GNIF…RFKS), 191 to 268 (TNVY…RAQK), and 294 to 370 (VNLY…LAQR). The tract at residues 166–289 (RKVFVGRFKS…FEQMKQDRIT (124 aa)) is CSDE1-binding. K299 carries the post-translational modification N6-methyllysine. S315 carries the phosphoserine modification. T319 carries the phosphothreonine modification. 4 positions are modified to omega-N-methylarginine: R385, R419, R432, and R436. Omega-N-methylated arginine; by CARM1 is present on residues R455 and R460. Omega-N-methylarginine occurs at positions 475 and 481. R493 is subject to Asymmetric dimethylarginine; alternate. The residue at position 493 (R493) is a Dimethylated arginine; alternate. Residue R493 is modified to Omega-N-methylarginine; alternate. R506 carries the omega-N-methylarginine modification. At K512 the chain carries N6-acetyllysine. At R518 the chain carries Omega-N-methylarginine. Positions 542–619 (QEPLTASMLA…AVAVLQAHQA (78 aa)) constitute a PABC domain.

The protein belongs to the polyadenylate-binding protein type-1 family. In terms of assembly, may form homodimers. Component of a multisubunit autoregulatory ribonucleoprotein complex (ARC), at least composed of IGF2BP1, PABPC1 and CSDE1. Directly interacts with IGF2BP1. Part of a complex associated with the FOS mCRD domain and consisting of HNRPD, SYNCRIP, PAIP1 and CSDE1/UNR. Interacts with PAIP1 and PAIP2 (via the PABPC1-interacting motifs PAM1 and PAM2). Interacts with PAIP1 with a 1:1 stoichiometry and with PAIP2 with a 1:2 stoichiometry. The interaction with CSDE1 is direct and RNA-independent. Found in a mRNP complex with YBX2. Interacts with TENT2/GLD2. Identified in the spliceosome C complex. Identified in a mRNP complex, at least composed of DHX9, DDX3X, ELAVL1, HNRNPU, IGF2BP1, ILF3, PABPC1, PCBP2, PTBP2, STAU1, STAU2, SYNCRIP and YBX1. The interaction with DDX3X is direct and RNA-independent. This interaction increases in stressed cells and decreases during cell recovery. Identified in a IGF2BP1-dependent mRNP granule complex containing untranslated mRNAs. Interacts with NXF1/TAP. Interacts with PIWIL1. Interacts with AGO1, AGO2, GSPT1 and GSPT2. Interacts with LARP4B. Interacts (via the second and third RRM domains and the C-terminus) with PAIP2B (via central acidic portion and C-terminus). Forms a complex with LARP1 and SHFL. Interacts with LARP4. Interacts with ZFC3H1 in a RNase-sensitive manner. Interacts with TRIM71 (via NHL repeats) in an RNA-dependent manner. Interacts with TENT5C; the interaction has no effect on TENT5C poly(A) polymerase function. Interacts with G3BP1 and G3BP2. Interacts with ENDOV; the interaction is RNA-dependent and stimulates ENDOV activity. Interacts with UPF1; the interaction is RNA-dependent. Interacts with IGF2BP2 and IGF2BP3. May interact with SETX. Interacts with RBM46. Interacts with PAN3. Post-translationally, phosphorylated by MAPKAPK2. Methylated by CARM1. Arg-493 is dimethylated, probably to asymmetric dimethylarginine.

It is found in the cytoplasm. The protein localises to the stress granule. The protein resides in the nucleus. Its subcellular location is the cell projection. It localises to the lamellipodium. Its function is as follows. Binds the poly(A) tail of mRNA, including that of its own transcript, and regulates processes of mRNA metabolism such as pre-mRNA splicing and mRNA stability. Its function in translational initiation regulation can either be enhanced by PAIP1 or repressed by PAIP2. Can probably bind to cytoplasmic RNA sequences other than poly(A) in vivo. Binds to N6-methyladenosine (m6A)-containing mRNAs and contributes to MYC stability by binding to m6A-containing MYC mRNAs. Involved in translationally coupled mRNA turnover. Implicated with other RNA-binding proteins in the cytoplasmic deadenylation/translational and decay interplay of the FOS mRNA mediated by the major coding-region determinant of instability (mCRD) domain. Involved in regulation of nonsense-mediated decay (NMD) of mRNAs containing premature stop codons; for the recognition of premature termination codons (PTC) and initiation of NMD a competitive interaction between UPF1 and PABPC1 with the ribosome-bound release factors is proposed. By binding to long poly(A) tails, may protect them from uridylation by ZCCHC6/ZCCHC11 and hence contribute to mRNA stability. The sequence is that of Polyadenylate-binding protein 1 (PABPC1) from Pongo abelii (Sumatran orangutan).